We begin with the raw amino-acid sequence, 228 residues long: PKHD-type hydroxylase RPE_4577 (228 aa).

In terms of domain architecture, Fe2OG dioxygenase spans 78–180 (TIFPPLFNRY…RIASFFWTQS (103 aa)). Residues His-98, Asp-100, and His-161 each contribute to the Fe cation site. Arg-171 contributes to the 2-oxoglutarate binding site.

The cofactor is Fe(2+). L-ascorbate serves as cofactor.

This is PKHD-type hydroxylase RPE_4577 from Rhodopseudomonas palustris (strain BisA53).